A 111-amino-acid polypeptide reads, in one-letter code: MTLDPNVAARLKRNADGLFTAVVQERGSGDVLMVAWMDDDALDRTLKTREATYYSRSRGEQWVKGATSGHTQYVHSVRLDCDGDTVLLTVDQVGGACHTGDHTCFDATVLL.

Asp-80 serves as a coordination point for Mg(2+). Residue Cys-81 participates in Zn(2+) binding. 2 residues coordinate Mg(2+): Asp-82 and Asp-84. 2 residues coordinate Zn(2+): Cys-97 and Cys-104.

It belongs to the PRA-CH family. Homodimer. Requires Mg(2+) as cofactor. It depends on Zn(2+) as a cofactor.

It is found in the cytoplasm. The enzyme catalyses 1-(5-phospho-beta-D-ribosyl)-5'-AMP + H2O = 1-(5-phospho-beta-D-ribosyl)-5-[(5-phospho-beta-D-ribosylamino)methylideneamino]imidazole-4-carboxamide. Its pathway is amino-acid biosynthesis; L-histidine biosynthesis; L-histidine from 5-phospho-alpha-D-ribose 1-diphosphate: step 3/9. In terms of biological role, catalyzes the hydrolysis of the adenine ring of phosphoribosyl-AMP. The sequence is that of Phosphoribosyl-AMP cyclohydrolase from Mycobacterium ulcerans (strain Agy99).